Here is a 328-residue protein sequence, read N- to C-terminus: DNA-directed RNA polymerase subunit alpha (328 aa).

The interval 1–244 (MEKFLKYEIK…EHLNPIVSVN (244 aa)) is alpha N-terminal domain (alpha-NTD). Positions 261-328 (KVKSFAKQIE…VQELGLKFRS (68 aa)) are alpha C-terminal domain (alpha-CTD).

Belongs to the RNA polymerase alpha chain family. In terms of assembly, homodimer. The RNAP catalytic core consists of 2 alpha, 1 beta, 1 beta' and 1 omega subunit. When a sigma factor is associated with the core the holoenzyme is formed, which can initiate transcription.

The catalysed reaction is RNA(n) + a ribonucleoside 5'-triphosphate = RNA(n+1) + diphosphate. Its function is as follows. DNA-dependent RNA polymerase catalyzes the transcription of DNA into RNA using the four ribonucleoside triphosphates as substrates. The sequence is that of DNA-directed RNA polymerase subunit alpha from Mycoplasma genitalium (strain ATCC 33530 / DSM 19775 / NCTC 10195 / G37) (Mycoplasmoides genitalium).